The following is a 793-amino-acid chain: Outer membrane protein assembly factor BamA (793 aa).

Positions 1 to 19 (MKKLLIASLLFGTTTTVFA) are cleaved as a signal peptide. POTRA domains follow at residues 22-89 (FVAK…VVAK), 90-170 (SIIS…INED), 173-259 (AKLA…VNEG), 262-341 (YDLR…VDAG), and 344-418 (LTVR…VKER).

Belongs to the BamA family. In terms of assembly, part of the Bam complex.

Its subcellular location is the cell outer membrane. Part of the outer membrane protein assembly complex, which is involved in assembly and insertion of beta-barrel proteins into the outer membrane. The chain is Outer membrane protein assembly factor BamA from Haemophilus influenzae.